A 66-amino-acid chain; its full sequence is Large ribosomal subunit protein bL35 (66 aa).

Basic residues predominate over residues 1–46; that stretch reads MPKMKTHRASAKRFKRTANGGLKRHHAFTGHRFHGKTKKQRRHLRK. Positions 1 to 52 are disordered; sequence MPKMKTHRASAKRFKRTANGGLKRHHAFTGHRFHGKTKKQRRHLRKPAMVSR.

The protein belongs to the bacterial ribosomal protein bL35 family.

This chain is Large ribosomal subunit protein bL35, found in Lactobacillus acidophilus (strain ATCC 700396 / NCK56 / N2 / NCFM).